The chain runs to 1174 residues: Male determiner protein Mdmd(III) (1174 aa).

A compositionally biased stretch (basic and acidic residues) spans 1–15 (MNATDAESRKPENKP). Disordered stretches follow at residues 1 to 51 (MNAT…SGQR), 80 to 109 (KDGS…HPVE), and 136 to 259 (KQLS…LRRS). Residues 16 to 35 (SSESSSSGSTSGSSDGEVSS) are compositionally biased toward low complexity. Polar residues predominate over residues 36–47 (KTYFKNNKSKVL). Residues 80-92 (KDGSNEMLPKEDS) are compositionally biased toward basic and acidic residues. Positions 93–102 (INTNHNYTTD) are enriched in polar residues. Over residues 138-153 (LSAYRSRSRSTRLSYS) the composition is skewed to low complexity. Residues 167-180 (SRYKKSVLRNRRTS) are compositionally biased toward basic residues. Basic and acidic residues predominate over residues 183-200 (HGRDSSTTKRSVSRDKDN). Over residues 201–223 (RLRRRIGSSRSHTRSHSRFRRSE) the composition is skewed to basic residues. The span at 235–259 (RSQERRHERRRSMSSDYERIALRRS) shows a compositional bias: basic and acidic residues. In terms of domain architecture, MIF4G spans 348–531 (KKYIHGYINK…KVLFQVRRDG (184 aa)). In terms of domain architecture, MI spans 641–757 (ALRRTIYLTL…SWDVLDCIKL (117 aa)). The span at 840-857 (SAPSSSSSSSLSSELSAP) shows a compositional bias: low complexity. Disordered regions lie at residues 840 to 1045 (SAPS…SRTK) and 1096 to 1133 (KDNY…NHSR). Residues 869-909 (KKKHKGKNKKMTKKKNPSKKKEKTKKFVGKNKIAAKNKTIK) are compositionally biased toward basic residues. The span at 910 to 924 (RRTDKDNSSSKDNFL) shows a compositional bias: basic and acidic residues. Residues 926 to 957 (SESSSNESISLDSLSSELFAPSSYSSSESSND) show a composition bias toward low complexity. The segment covering 963 to 1001 (KHKGKNKKMTKKKNPSNKKEKTKKKLSKNKKAPNKNTKK) has biased composition (basic residues). Residues 1010-1020 (SSESSISESKS) show a composition bias toward low complexity. The segment covering 1034-1045 (RKKRVTSKSRTK) has biased composition (basic residues). Over residues 1103–1118 (QNHEISQRHDSEIKRR) the composition is skewed to basic and acidic residues. Basic residues predominate over residues 1119 to 1130 (REERKKRHHEKN).

Belongs to the CWC22 family. As to quaternary structure, component of the spliceosome C complex.

The protein resides in the nucleus speckle. Its function is as follows. Male determiner protein (M-factor) that controls male somatic sexual differentiation. Acts as a dominant factor that regulates the mRNA splicing of transformer (tra) and doublesex (dsx) transcripts and promotes expression of male splice forms of tra and dsx. Probably acts as a component of the spliceosome C complex required for mRNA splicing factor and exon-junction complex (EJC) assembly. Hinders eIF4AIII from non-specifically binding RNA and escorts it to the splicing machinery to promote EJC assembly on mature mRNAs. The protein is Male determiner protein Mdmd(III) of Musca domestica (House fly).